The following is a 424-amino-acid chain: Folate-like transporter 2 (424 aa).

Asparagine 35 is a glycosylation site (N-linked (GlcNAc...) asparagine). A run of 6 helical transmembrane segments spans residues 48 to 68, 71 to 91, 99 to 119, 136 to 156, 164 to 184, and 233 to 253; these read IWTYSYLITLIPAFLLTDVFL, PLLVFEAFSYFLCWVIFVFGK, LEVFYGWATATEIAYFAYIYV, ALLVGRFLAYALAQLLIGLNW, IISLVAMTIAVFLALILPGVE, and PLILKWSVWSALSSCIFYQVT. Asparagine 254 carries N-linked (GlcNAc...) asparagine glycosylation. A run of 4 helical transmembrane segments spans residues 299 to 319, 324 to 344, 361 to 381, and 392 to 412; these read WGDLLLAVGSIGQAGLLFWMS, IVVLYLSYIFYRVIYQLTTTI, LFGINTFVALLLQSILTAVVI, and FVVYSCYHLVVAFGFAIIFGI.

The protein belongs to the reduced folate carrier (RFC) transporter (TC 2.A.48) family.

Its subcellular location is the membrane. In terms of biological role, unlike folt-1, does not appear to act as a folate transporter. In Caenorhabditis elegans, this protein is Folate-like transporter 2 (folt-2).